The primary structure comprises 257 residues: MSGFDNFNTDFYQSSYSVDDQNQGGYGYSNTDEPYKPYGQYDYSQPMGYSAAPGMMQPQQPYTGQIYQPTPAFTPTSSQSMYSSSFEDEPPLLEELGINFDHIWQKTLTVLHPLKASDGSIMNETDLAGPMVFCLAFGATLLLTGKIQFGYVYGISAIGCLGMYCLLNLMSMTGVSFGCVASVLGYCLLPMIILSSFGVIFSLQGIMGIILTAAIIGWCSLSASKIFISALAMDGQQLLVAYPCALLYGVFALISVF.

The Cytoplasmic segment spans residues 1–124; sequence MSGFDNFNTD…KASDGSIMNE (124 aa). Residues 125–145 form a helical membrane-spanning segment; that stretch reads TDLAGPMVFCLAFGATLLLTG. Position 146 (Lys-146) is a topological domain, lumenal. The chain crosses the membrane as a helical span at residues 147–167; sequence IQFGYVYGISAIGCLGMYCLL. Over 168-173 the chain is Cytoplasmic; it reads NLMSMT. The chain crosses the membrane as a helical span at residues 174-194; it reads GVSFGCVASVLGYCLLPMIIL. Residues 195–196 lie on the Lumenal side of the membrane; it reads SS. The helical transmembrane segment at 197 to 217 threads the bilayer; that stretch reads FGVIFSLQGIMGIILTAAIIG. Over 218–236 the chain is Cytoplasmic; it reads WCSLSASKIFISALAMDGQ. The chain crosses the membrane as a helical span at residues 237–257; the sequence is QLLVAYPCALLYGVFALISVF.

It belongs to the YIP1 family.

It localises to the endoplasmic reticulum membrane. The protein localises to the golgi apparatus. Its subcellular location is the cis-Golgi network membrane. Plays a role in transport between endoplasmic reticulum and Golgi. This is Protein YIPF5 (yipf5) from Danio rerio (Zebrafish).